The primary structure comprises 580 residues: Mitogen-activated protein kinase 12 (580 aa).

Positions 18–38 (RTASGSNQSSNAGEEAASSDL) are disordered. Polar residues predominate over residues 20–29 (ASGSNQSSNA). The region spanning 87 to 378 (YQIQEVIGKG…AEEALADPYF (292 aa)) is the Protein kinase domain. ATP-binding positions include 93-101 (IGKGSYGVV) and Lys-116. The Proton acceptor role is filled by Asp-213. Phosphothreonine is present on Thr-249. Residues 249 to 251 (TDY) carry the TXY motif. Residue Tyr-251 is modified to Phosphotyrosine. The tract at residues 325–506 (ARRYLSTMRK…SADSVARTTV (182 aa)) is required for kinase activity and nuclear localization. Positions 458–580 (YSKGERGSPL…LSEQVSRMHS (123 aa)) are disordered. A compositionally biased stretch (polar residues) spans 502–543 (ARTTVSPPMSQDAQQHGSAGQNGVTSTDLSSRSYLKSASISA). Residues 554-566 (EPEDDYISEEMEG) show a composition bias toward acidic residues.

This sequence belongs to the protein kinase superfamily. CMGC Ser/Thr protein kinase family. MAP kinase subfamily. As to quaternary structure, interacts with EREBP1. Post-translationally, dually phosphorylated on Thr-249 and Tyr-251, which activates the enzyme. Phosphorylated on tyrosine residue.

Its subcellular location is the cytoplasm. The protein localises to the nucleus. It catalyses the reaction L-seryl-[protein] + ATP = O-phospho-L-seryl-[protein] + ADP + H(+). The catalysed reaction is L-threonyl-[protein] + ATP = O-phospho-L-threonyl-[protein] + ADP + H(+). With respect to regulation, activated by threonine and tyrosine phosphorylation. Activated in response to hydrogen peroxide, salicylic acid, jasmonic acid, ethylene, fungal elicitor and infection with rice blast fungus (M.grisea). May be involved in defense signaling pathway. Phosphorylates EREBP1 transcriptional activator in vitro. Enhances DNA-binding activity of EREBP1 to the GCC box element of pathogenesis-related (PR) gene promoters. This chain is Mitogen-activated protein kinase 12 (MPK12), found in Oryza sativa subsp. japonica (Rice).